A 520-amino-acid chain; its full sequence is Hydroxymethylglutaryl-CoA synthase, cytoplasmic (520 aa).

Phosphoserine is present on S4. Positions 43 and 44 each coordinate (3S)-3-hydroxy-3-methylglutaryl-CoA. Residue 44-46 coordinates CoA; it reads AGK. K46 is modified (N6-acetyllysine). E95 acts as the Proton donor/acceptor in catalysis. C129, N167, T171, S221, and H264 together coordinate (3S)-3-hydroxy-3-methylglutaryl-CoA. C129 (acyl-thioester intermediate) is an active-site residue. N167 lines the CoA pocket. Residue S221 coordinates CoA. H264 acts as the Proton donor/acceptor in catalysis. CoA is bound by residues K269 and K273. Positions 273, 343, and 377 each coordinate (3S)-3-hydroxy-3-methylglutaryl-CoA. Residue K273 is modified to N6-acetyllysine. Residues 488 to 520 are disordered; sequence TATEHIPSPAKKVPRLPATSAESESAVISNGEH. A phosphoserine mark is found at S495 and S516. Over residues 507–520 the composition is skewed to polar residues; it reads SAESESAVISNGEH.

The protein belongs to the thiolase-like superfamily. HMG-CoA synthase family. In terms of assembly, homodimer.

It is found in the cytoplasm. The enzyme catalyses acetoacetyl-CoA + acetyl-CoA + H2O = (3S)-3-hydroxy-3-methylglutaryl-CoA + CoA + H(+). Its pathway is metabolic intermediate biosynthesis; (R)-mevalonate biosynthesis; (R)-mevalonate from acetyl-CoA: step 2/3. Functionally, catalyzes the condensation of acetyl-CoA with acetoacetyl-CoA to form HMG-CoA, which is converted by HMG-CoA reductase (HMGCR) into mevalonate, a precursor for cholesterol synthesis. The protein is Hydroxymethylglutaryl-CoA synthase, cytoplasmic of Mus musculus (Mouse).